Consider the following 296-residue polypeptide: Xyloglucan endotransglucosylase/hydrolase 1 (296 aa).

Positions 1–23 are cleaved as a signal peptide; sequence MGSSSSMWTVCVILASLASAALC. The GH16 domain occupies 24-222; sequence ANPRRPVDVQ…WSKAPFIAAY (199 aa). Glu-108 acts as the Nucleophile in catalysis. Residue Glu-112 is the Proton donor of the active site. Glu-112 lines the xyloglucan pocket. N-linked (GlcNAc...) asparagine glycosylation occurs at Asn-116. Residues 125–127, 135–137, 201–202, and Gly-206 each bind xyloglucan; these read QTN, DRE, and DW. 2 disulfide bridges follow: Cys-230-Cys-239 and Cys-276-Cys-290. Arg-281 serves as a coordination point for xyloglucan.

Belongs to the glycosyl hydrolase 16 family. XTH group 1 subfamily. Post-translationally, contains at least one intrachain disulfide bond essential for its enzymatic activity. N-glycosylated; not essential for its enzymatic activity.

Its subcellular location is the secreted. The protein resides in the cell wall. The protein localises to the extracellular space. It localises to the apoplast. It catalyses the reaction breaks a beta-(1-&gt;4) bond in the backbone of a xyloglucan and transfers the xyloglucanyl segment on to O-4 of the non-reducing terminal glucose residue of an acceptor, which can be a xyloglucan or an oligosaccharide of xyloglucan.. Catalyzes xyloglucan endohydrolysis (XEH) and/or endotransglycosylation (XET). Cleaves and religates xyloglucan polymers, an essential constituent of the primary cell wall, and thereby participates in cell wall construction of growing tissues. The polypeptide is Xyloglucan endotransglucosylase/hydrolase 1 (Glycine max (Soybean)).